The following is a 229-amino-acid chain: Probable U3 small nucleolar RNA-associated protein 11 (229 aa).

Disordered stretches follow at residues 1–23 (MSSLRNAIQRRAHKERAQPESRK) and 199–229 (KKPGRKRKLREDEIENQTSRPVYKWRAQRKR).

The protein belongs to the UTP11 family. Component of the ribosomal small subunit (SSU) processome.

Its subcellular location is the nucleus. It localises to the nucleolus. Involved in nucleolar processing of pre-18S ribosomal RNA. The sequence is that of Probable U3 small nucleolar RNA-associated protein 11 from Oryza sativa subsp. japonica (Rice).